Reading from the N-terminus, the 501-residue chain is Solute carrier family 2, facilitated glucose transporter member 5 (501 aa).

Position 1 is an N-acetylmethionine (Met-1). Residues 1–17 (MEEKHQEETGELTLVLA) lie on the Cytoplasmic side of the membrane. A helical membrane pass occupies residues 18 to 38 (LATLIAAFGSSFQYGYNVAAV). Tyr-31 is a D-fructose binding site. At 39 to 67 (NSPSEFMQQFYNDTYYDRNEENIESFTLT) the chain is on the extracellular side. Asn-50 carries N-linked (GlcNAc...) asparagine glycosylation. Residues 68-90 (LLWSLTVSMFPFGGFIGSLMVGT) traverse the membrane as a helical segment. Residues 91–97 (LVNKLGR) lie on the Cytoplasmic side of the membrane. The chain crosses the membrane as a helical span at residues 98–118 (KGALLFNNIFSILPAILMGCS). Over 119–125 (QIAQSFE) the chain is Extracellular. Residues 126–148 (LIIISRLLVGICAGISSNVVPMY) form a helical membrane-spanning segment. The Cytoplasmic portion of the chain corresponds to 149–160 (LGELAPKNLRGA). Residues 161–181 (LGVVPQLFITVGILVAQLFGL) form a helical membrane-spanning segment. Gln-166 is a binding site for D-fructose. Residues 182 to 191 (RSLLANEDGW) are Extracellular-facing. The chain crosses the membrane as a helical span at residues 192–212 (PVLLGLTGVPAGLQLLLLPFF). Residues 213 to 276 (PESPRYLLIQ…LFTMQSLRWQ (64 aa)) are Cytoplasmic-facing. The chain crosses the membrane as a helical span at residues 277–297 (LISMIVLMAGQQLSGVNAIYY). Residues Gln-287 and 295 to 297 (IYY) contribute to the D-fructose site. Residues 298–312 (YADQIYLSAGVKSDD) lie on the Extracellular side of the membrane. The helical transmembrane segment at 313 to 333 (VQYVTAGTGAVNVFMTILTIF) threads the bilayer. The Cytoplasmic segment spans residues 334 to 341 (VVELWGRR). A helical membrane pass occupies residues 342 to 362 (FLLLVGFSTCLIACLVLTAAL). Topologically, residues 363 to 370 (ALQNTISW) are extracellular. Residues 371 to 393 (MPYISIVCVIVYVIGHALGPSPI) traverse the membrane as a helical segment. His-386 contacts D-fructose. The Cytoplasmic portion of the chain corresponds to 394-411 (PALLITEIFLQSSRPAAY). A helical membrane pass occupies residues 412–432 (MIGGSVHWLSNFTVGLIFPFI). 418 to 419 (HW) provides a ligand contact to D-fructose. The Extracellular segment spans residues 433 to 438 (QMGLGP). The helical transmembrane segment at 439-459 (YSFIIFATICFLTTIYIFMVV) threads the bilayer. Over 460–501 (PETKGRTFIEINQIFTMKNKVSDVYPKKEEELGALPHAILEQ) the chain is Cytoplasmic.

It belongs to the major facilitator superfamily. Sugar transporter (TC 2.A.1.1) family. Glucose transporter subfamily. In terms of tissue distribution, detected at the apical membrane of villi in the jejunum. Detected in jejunum mucosa. Detected in epididymis and whole testis (at protein level). Detected in small intestine, kidney and testis. Detected in cochlea, but not in inner or outer cochlear hair cells.

Its subcellular location is the apical cell membrane. It localises to the cell membrane. The protein localises to the sarcolemma. It carries out the reaction D-fructose(out) = D-fructose(in). Its activity is regulated as follows. Fructose uptake is inhibited by cytochalasin B. Functions as a fructose transporter that has only low activity with other monosaccharides. Can mediate the uptake of deoxyglucose, but with low efficiency. Essential for fructose uptake in the small intestine. Plays a role in the regulation of salt uptake and blood pressure in response to dietary fructose. Required for the development of high blood pressure in response to high dietary fructose intake. The polypeptide is Solute carrier family 2, facilitated glucose transporter member 5 (Mus musculus (Mouse)).